We begin with the raw amino-acid sequence, 921 residues long: Translation initiation factor IF-2 (921 aa).

Residues 1–296 (MADQNTPGDK…PGPQKQRGRL (296 aa)) are disordered. The segment covering 80–89 (RPSGPRPSGG) has biased composition (low complexity). The segment covering 117 to 183 (ARVRDLEERR…AKKRFGEGEA (67 aa)) has biased composition (basic and acidic residues). 2 stretches are compositionally biased toward low complexity: residues 184-237 (PRPA…ARPA) and 248-257 (GRAPAAVAAG). The tr-type G domain maps to 417 to 586 (PRSPVVTVMG…MIALQADILD (170 aa)). Residues 426–433 (GHVDHGKT) are G1. GTP is bound at residue 426-433 (GHVDHGKT). The tract at residues 451–455 (GITQH) is G2. The interval 474-477 (DTPG) is G3. GTP-binding positions include 474–478 (DTPGH) and 528–531 (NKID). The tract at residues 528–531 (NKID) is G4. A G5 region spans residues 564–566 (SAK).

The protein belongs to the TRAFAC class translation factor GTPase superfamily. Classic translation factor GTPase family. IF-2 subfamily.

The protein resides in the cytoplasm. Its function is as follows. One of the essential components for the initiation of protein synthesis. Protects formylmethionyl-tRNA from spontaneous hydrolysis and promotes its binding to the 30S ribosomal subunits. Also involved in the hydrolysis of GTP during the formation of the 70S ribosomal complex. The protein is Translation initiation factor IF-2 of Bradyrhizobium sp. (strain ORS 278).